The primary structure comprises 65 residues: Small ribosomal subunit protein bS21 (65 aa).

The protein belongs to the bacterial ribosomal protein bS21 family.

The chain is Small ribosomal subunit protein bS21 from Chlorobium chlorochromatii (strain CaD3).